The sequence spans 321 residues: MIKKIAVLTSGGDAPGMNAAIRAVVRAGLSEGLEVYGVFDGYQGLFENRIQKLSRYSVSDVINRGGTFLGSARFPEFKQPEVRSKCAEILHSHGIDALVVIGGDGSYTGAKLLTEEHGFPCIGLPGTIDNDIPGTDYTIGYQTALETAVDAIDRLRDTSGSHHRISIVEIMGRHCSDLTICAAIAGGCEYIVAPEVGFNQEELIQQIELSLANGKRHAIIAITELVTDVHKLAKDIEARVGNETRATVLGHVQRGGSPCAFDRILASRMGVYAVELLLQGHKGRCVGIQQEKLVHHDIIEAIDSMRRPFKSDYLEVSKKLF.

Position 12 (Gly-12) interacts with ATP. ADP-binding positions include 22 to 26 (RAVVR) and 55 to 60 (RYSVSD). ATP contacts are provided by residues 73-74 (RF) and 103-106 (GDGS). Mg(2+) is bound at residue Asp-104. Residue 127 to 129 (TID) participates in substrate binding. Residue Asp-129 is the Proton acceptor of the active site. Arg-156 serves as a coordination point for ADP. Residues Arg-164 and 171 to 173 (MGR) contribute to the substrate site. ADP is bound by residues 187 to 189 (GCE) and 215 to 217 (KRH). Residues Glu-224, Arg-245, and 251–254 (HVQR) contribute to the substrate site.

This sequence belongs to the phosphofructokinase type A (PFKA) family. ATP-dependent PFK group I subfamily. Prokaryotic clade 'B1' sub-subfamily. In terms of assembly, homotetramer. Requires Mg(2+) as cofactor.

It localises to the cytoplasm. It carries out the reaction beta-D-fructose 6-phosphate + ATP = beta-D-fructose 1,6-bisphosphate + ADP + H(+). Its pathway is carbohydrate degradation; glycolysis; D-glyceraldehyde 3-phosphate and glycerone phosphate from D-glucose: step 3/4. With respect to regulation, allosterically activated by ADP and other diphosphonucleosides, and allosterically inhibited by phosphoenolpyruvate. Functionally, catalyzes the phosphorylation of D-fructose 6-phosphate to fructose 1,6-bisphosphate by ATP, the first committing step of glycolysis. The chain is ATP-dependent 6-phosphofructokinase from Actinobacillus succinogenes (strain ATCC 55618 / DSM 22257 / CCUG 43843 / 130Z).